We begin with the raw amino-acid sequence, 484 residues long: ATP synthase subunit beta (484 aa).

Residue 168–175 (GGAGVGKT) coordinates ATP.

It belongs to the ATPase alpha/beta chains family. In terms of assembly, F-type ATPases have 2 components, CF(1) - the catalytic core - and CF(0) - the membrane proton channel. CF(1) has five subunits: alpha(3), beta(3), gamma(1), delta(1), epsilon(1). CF(0) has three main subunits: a(1), b(2) and c(9-12). The alpha and beta chains form an alternating ring which encloses part of the gamma chain. CF(1) is attached to CF(0) by a central stalk formed by the gamma and epsilon chains, while a peripheral stalk is formed by the delta and b chains.

The protein localises to the cell membrane. The enzyme catalyses ATP + H2O + 4 H(+)(in) = ADP + phosphate + 5 H(+)(out). In terms of biological role, produces ATP from ADP in the presence of a proton gradient across the membrane. The catalytic sites are hosted primarily by the beta subunits. The polypeptide is ATP synthase subunit beta (Arthrobacter sp. (strain FB24)).